A 920-amino-acid polypeptide reads, in one-letter code: Rho GTPase-activating protein REN1 (920 aa).

Residues 1-10 are compositionally biased toward polar residues; that stretch reads MANKNAESSS. The interval 1 to 64 is disordered; that stretch reads MANKNAESSS…SRGGNTVFKS (64 aa). Low complexity predominate over residues 17–31; that stretch reads QPNQQQQQQPPIANE. The span at 45–64 shows a compositional bias: polar residues; that stretch reads PAQSGNTDSRSRGGNTVFKS. In terms of domain architecture, PH spans 60–167; it reads TVFKSGPLSI…WKAALENALT (108 aa). Residues 213–412 enclose the Rho-GAP domain; sequence LALEDVDGAP…TLLEEYESIF (200 aa). Disordered regions lie at residues 417-592, 719-825, and 837-920; these read LSPG…NLSM, RLGH…ALSK, and RSQI…TFSR. Acidic residues predominate over residues 434–463; it reads EGSDDEEYDDDDDGSQGSEDYTDEEEDLEN. Over residues 464–473 the composition is skewed to polar residues; that stretch reads ESNGSYSESA. Basic and acidic residues-rich tracts occupy residues 475–491, 499–509, and 520–532; these read SEDK…HKIN, KSPKRSKEPKK, and PRHD…EDIV. Polar residues predominate over residues 555–568; the sequence is SSTSDVASDTQKPS. Positions 577–586 are enriched in basic residues; it reads SKRHWGRTPG. A coiled-coil region spans residues 598 to 728; it reads SVEVDEDNAD…RLGHHDGKAS (131 aa). Basic and acidic residues-rich tracts occupy residues 734-768 and 776-788; these read ASKE…RSTS and RENE…DSRS. Positions 814–825 are enriched in low complexity; that stretch reads EGSTTTTSALSK. Polar residues-rich tracts occupy residues 854-864 and 872-885; these read GQPSPTSGQNR and GSGS…SKLQ. A compositionally biased stretch (basic and acidic residues) spans 889–903; that stretch reads ILDRGRSENGGDRGR. Polar residues predominate over residues 910 to 920; sequence HPNTTPRTFSR.

As to quaternary structure, interacts with ARAC11/ROP1. Expressed in pollen and pollen tubes.

It is found in the cell membrane. Acts as a GTPase activator for the Rac-type GTPase by converting it to an inactive GDP-bound state. Maintains the global inactivation of ARAC11/ROP1 at the apex in pollen tubes in order to regulate the polar cell growth. The sequence is that of Rho GTPase-activating protein REN1 (REN1) from Arabidopsis thaliana (Mouse-ear cress).